Reading from the N-terminus, the 199-residue chain is 3-hexulose-6-phosphate isomerase (199 aa).

One can recognise an SIS domain in the interval 44–186; it reads LARQIVQPGR…FQSLWDHTEV (143 aa). Substrate is bound by residues Ser62 and 101-106; that span reads SGSGTT. Glu166 functions as the Proton acceptor in the catalytic mechanism.

Belongs to the SIS family. PHI subfamily.

It carries out the reaction D-arabino-hex-3-ulose 6-phosphate = beta-D-fructose 6-phosphate. It functions in the pathway one-carbon metabolism; formaldehyde assimilation via RuMP pathway; D-fructose 6-phosphate from D-ribulose 5-phosphate and formaldehyde: step 2/2. Functionally, catalyzes the isomerization between 3-hexulose 6-phosphate and fructose 6-phosphate. This chain is 3-hexulose-6-phosphate isomerase (rmpB), found in Mycobacterium gastri.